Reading from the N-terminus, the 164-residue chain is Peptidyl-prolyl cis-trans isomerase A-like 4A (164 aa).

Residues 7 to 163 (FFDITVDGKP…KKITIADCGQ (157 aa)) enclose the PPIase cyclophilin-type domain.

This sequence belongs to the cyclophilin-type PPIase family. PPIase A subfamily. In terms of tissue distribution, highly expressed in brain, ovary and mammary gland. Moderately expressed in lung, salivary gland, kidney, skin, adipose tissue, intestine and spleen. Weakly expressed in skeletal muscle, liver and stomach. Expressed in pleiomorphic and undifferentiated liposarcomas, osteosarcomas and breast carcinomas.

The protein localises to the cytoplasm. It catalyses the reaction [protein]-peptidylproline (omega=180) = [protein]-peptidylproline (omega=0). Functionally, PPIases accelerate the folding of proteins. It catalyzes the cis-trans isomerization of proline imidic peptide bonds in oligopeptides. This chain is Peptidyl-prolyl cis-trans isomerase A-like 4A, found in Homo sapiens (Human).